The chain runs to 105 residues: Large ribosomal subunit protein uL24 (105 aa).

Belongs to the universal ribosomal protein uL24 family. As to quaternary structure, part of the 50S ribosomal subunit.

In terms of biological role, one of two assembly initiator proteins, it binds directly to the 5'-end of the 23S rRNA, where it nucleates assembly of the 50S subunit. Functionally, one of the proteins that surrounds the polypeptide exit tunnel on the outside of the subunit. The sequence is that of Large ribosomal subunit protein uL24 from Xanthomonas axonopodis pv. citri (strain 306).